The chain runs to 428 residues: Enolase (428 aa).

Gln163 serves as a coordination point for (2R)-2-phosphoglycerate. Glu205 functions as the Proton donor in the catalytic mechanism. 3 residues coordinate Mg(2+): Asp242, Glu285, and Asp312. (2R)-2-phosphoglycerate is bound by residues Lys337, Arg366, Ser367, and Lys388. Residue Lys337 is the Proton acceptor of the active site.

Belongs to the enolase family. It depends on Mg(2+) as a cofactor.

It is found in the cytoplasm. Its subcellular location is the secreted. The protein resides in the cell surface. The enzyme catalyses (2R)-2-phosphoglycerate = phosphoenolpyruvate + H2O. It functions in the pathway carbohydrate degradation; glycolysis; pyruvate from D-glyceraldehyde 3-phosphate: step 4/5. Functionally, catalyzes the reversible conversion of 2-phosphoglycerate (2-PG) into phosphoenolpyruvate (PEP). It is essential for the degradation of carbohydrates via glycolysis. In Nitrosomonas eutropha (strain DSM 101675 / C91 / Nm57), this protein is Enolase.